The primary structure comprises 450 residues: Glutamate--tRNA ligase 2 (450 aa).

The 'HIGH' region signature appears at 10-20 (PSPTGFLHIGG). Residues 232–236 (KLSKR) carry the 'KMSKS' region motif. Lys235 provides a ligand contact to ATP.

It belongs to the class-I aminoacyl-tRNA synthetase family. Glutamate--tRNA ligase type 1 subfamily. In terms of assembly, monomer.

The protein localises to the cytoplasm. The catalysed reaction is tRNA(Glu) + L-glutamate + ATP = L-glutamyl-tRNA(Glu) + AMP + diphosphate. In terms of biological role, catalyzes the attachment of glutamate to tRNA(Glu) in a two-step reaction: glutamate is first activated by ATP to form Glu-AMP and then transferred to the acceptor end of tRNA(Glu). This chain is Glutamate--tRNA ligase 2, found in Wolbachia pipientis subsp. Culex pipiens (strain wPip).